Here is a 338-residue protein sequence, read N- to C-terminus: MITIEQLISQIEQRQPVLNKAELSAEQRRLSLEGIGNLTMANRQQLSFLANPHYLSSLANTDAGAVLITEEHHEEVPNDTVALIVAVPYLAYASVSQIFARQHSFSGIHPTAFIADSAVIGNKVTIGAFCVIGEQVQIGDRSVLEAHVVIEDNTTIGTDGVIKSQVVIGHDCIIGSHVRLHAGVTIGSEGFGFAPTANPSVTGWERIAQLGRVLIGDHVRIGSQTCIDRGAIDDTVIGNHVIIDNLVQVAHNVRIGDGTAIAAHTGIAGSTTIGKRCIIGGAVGITGHIDITDDVTLSGMTMVTKSITTAGSYSSGTAAMPTANWRRAAVRFRQLGRD.

The active-site Proton acceptor is histidine 251.

This sequence belongs to the transferase hexapeptide repeat family. LpxD subfamily. Homotrimer.

The enzyme catalyses a UDP-3-O-[(3R)-3-hydroxyacyl]-alpha-D-glucosamine + a (3R)-hydroxyacyl-[ACP] = a UDP-2-N,3-O-bis[(3R)-3-hydroxyacyl]-alpha-D-glucosamine + holo-[ACP] + H(+). It participates in bacterial outer membrane biogenesis; LPS lipid A biosynthesis. Catalyzes the N-acylation of UDP-3-O-acylglucosamine using 3-hydroxyacyl-ACP as the acyl donor. Is involved in the biosynthesis of lipid A, a phosphorylated glycolipid that anchors the lipopolysaccharide to the outer membrane of the cell. This Psychrobacter cryohalolentis (strain ATCC BAA-1226 / DSM 17306 / VKM B-2378 / K5) protein is UDP-3-O-acylglucosamine N-acyltransferase.